Reading from the N-terminus, the 165-residue chain is Neurotrophin-3 (165 aa).

A signal peptide spans isoleucine 1 to serine 3. Positions threonine 4 to arginine 119 are excised as a propeptide. An N-linked (GlcNAc...) asparagine glycan is attached at asparagine 112.

It belongs to the NGF-beta family.

The protein resides in the secreted. In terms of biological role, seems to promote the survival of visceral and proprioceptive sensory neurons. The polypeptide is Neurotrophin-3 (NTF3) (Calabaria reinhardtii (Calabar boa)).